We begin with the raw amino-acid sequence, 815 residues long: Plakophilin-2 (815 aa).

The span at 1-12 (MLKPHPEHKEQP) shows a compositional bias: basic and acidic residues. 2 disordered regions span residues 1-31 (MLKP…MAEE) and 76-105 (QLTL…ISSS). Positions 13–25 (QDSFTPSGDSTPD) are enriched in polar residues. Positions 91–105 (SSLAESQSSCQISSS) are enriched in low complexity. ARM repeat units follow at residues 317–357 (KGKP…NQCF), 360–399 (PDAK…NIVF), 402–442 (NENK…NLSS), 457–498 (PLTD…NLSS), 501–547 (PDGR…NLSY), 604–644 (PHGV…NLTA), 652–691 (AIAH…NISR), 693–737 (RELH…NLSQ), and 740–783 (ASNT…TLWR).

The protein belongs to the beta-catenin family.

Its subcellular location is the nucleus. The protein resides in the cell junction. It is found in the desmosome. It localises to the cytoplasm. Its function is as follows. Required for development of the heart, potentially via cell-cell adhesion and modulation of expression of cardiac precursor genes. Plays a role in desmosome cell-cell junctions and their intracellular connectivity. The protein is Plakophilin-2 of Danio rerio (Zebrafish).